Reading from the N-terminus, the 298-residue chain is GTP cyclohydrolase FolE2 (298 aa).

The protein belongs to the GTP cyclohydrolase IV family.

It catalyses the reaction GTP + H2O = 7,8-dihydroneopterin 3'-triphosphate + formate + H(+). It participates in cofactor biosynthesis; 7,8-dihydroneopterin triphosphate biosynthesis; 7,8-dihydroneopterin triphosphate from GTP: step 1/1. Functionally, converts GTP to 7,8-dihydroneopterin triphosphate. This is GTP cyclohydrolase FolE2 from Xylella fastidiosa (strain M23).